A 438-amino-acid polypeptide reads, in one-letter code: Xylose isomerase (438 aa).

Active-site residues include H100 and D103. Residues E231, E267, H270, D295, D306, D308, and D338 each coordinate Mg(2+).

The protein belongs to the xylose isomerase family. In terms of assembly, homotetramer. It depends on Mg(2+) as a cofactor.

It is found in the cytoplasm. It catalyses the reaction alpha-D-xylose = alpha-D-xylulofuranose. The polypeptide is Xylose isomerase (xylA) (Thermoanaerobacter pseudethanolicus (strain ATCC 33223 / 39E) (Clostridium thermohydrosulfuricum)).